A 368-amino-acid polypeptide reads, in one-letter code: Serine/threonine-protein kinase CAK1 (368 aa).

The Protein kinase domain occupies 1-368 (MKLDSIDITH…QRILQELEKP (368 aa)). Asp156 serves as the catalytic Proton acceptor.

This sequence belongs to the protein kinase superfamily. CMGC Ser/Thr protein kinase family. CDC2/CDKX subfamily.

The enzyme catalyses L-seryl-[protein] + ATP = O-phospho-L-seryl-[protein] + ADP + H(+). It carries out the reaction L-threonyl-[protein] + ATP = O-phospho-L-threonyl-[protein] + ADP + H(+). This chain is Serine/threonine-protein kinase CAK1 (CAK1), found in Saccharomyces cerevisiae (strain ATCC 204508 / S288c) (Baker's yeast).